The sequence spans 121 residues: uncharacterized protein (121 aa).

This is an uncharacterized protein from Saccharomyces cerevisiae (strain ATCC 204508 / S288c) (Baker's yeast).